The primary structure comprises 275 residues: ATP synthase subunit delta (275 aa).

Belongs to the ATPase delta chain family. As to quaternary structure, F-type ATPases have 2 components, F(1) - the catalytic core - and F(0) - the membrane proton channel. F(1) has five subunits: alpha(3), beta(3), gamma(1), delta(1), epsilon(1). F(0) has three main subunits: a(1), b(2) and c(10-14). The alpha and beta chains form an alternating ring which encloses part of the gamma chain. F(1) is attached to F(0) by a central stalk formed by the gamma and epsilon chains, while a peripheral stalk is formed by the delta and b chains.

It localises to the cell membrane. Functionally, f(1)F(0) ATP synthase produces ATP from ADP in the presence of a proton or sodium gradient. F-type ATPases consist of two structural domains, F(1) containing the extramembraneous catalytic core and F(0) containing the membrane proton channel, linked together by a central stalk and a peripheral stalk. During catalysis, ATP synthesis in the catalytic domain of F(1) is coupled via a rotary mechanism of the central stalk subunits to proton translocation. Its function is as follows. This protein is part of the stalk that links CF(0) to CF(1). It either transmits conformational changes from CF(0) to CF(1) or is implicated in proton conduction. The polypeptide is ATP synthase subunit delta (Pseudarthrobacter chlorophenolicus (strain ATCC 700700 / DSM 12829 / CIP 107037 / JCM 12360 / KCTC 9906 / NCIMB 13794 / A6) (Arthrobacter chlorophenolicus)).